The following is a 226-amino-acid chain: Putative uroporphyrinogen-III synthase (226 aa).

It belongs to the uroporphyrinogen-III synthase family.

It carries out the reaction hydroxymethylbilane = uroporphyrinogen III + H2O. It functions in the pathway porphyrin-containing compound metabolism; protoporphyrin-IX biosynthesis; coproporphyrinogen-III from 5-aminolevulinate: step 3/4. Functionally, catalyzes cyclization of the linear tetrapyrrole, hydroxymethylbilane, to the macrocyclic uroporphyrinogen III. This is Putative uroporphyrinogen-III synthase from Archaeoglobus fulgidus (strain ATCC 49558 / DSM 4304 / JCM 9628 / NBRC 100126 / VC-16).